The chain runs to 364 residues: Inactive protein RESTRICTED TEV MOVEMENT 2 (364 aa).

Residues 14–121 (VQYEDFVPKS…LPETSRTEAA (108 aa)) form the sHSP domain. The A-1 repeat unit spans residues 129–133 (LEEKR). The interval 129-220 (LEEKRLLEES…LEERRLEERK (92 aa)) is 6 X 5 AA repeats A of L-E-E-[SKR]-[ERK]. Residues 135–139 (LEESR) form an A-2 repeat. One copy of the A-3 repeat lies at 156–160 (LEEKE). The stretch at 163-176 (IRKLQEEAKAKEEA) is one B-1 repeat. A 3 X 14 AA repeats B of [IMA]-[RK]-K-L-Q-E-E-A-K-A-K-E-[EK]-[LA] region spans residues 163–206 (IRKLQEEAKAKEEAEMRKLQEEAKAKEEAAAKKLQEEIEAKEKL). The stretch at 178-191 (MRKLQEEAKAKEEA) is one B-2 repeat. One copy of the B-3 repeat lies at 193–205 (AKKLQEEIEAKEK). The A-4 repeat unit spans residues 206 to 210 (LEERK). An A-5 repeat occupies 211–215 (LEERR). One copy of the A-6 repeat lies at 216-220 (LEERK). A helical transmembrane segment spans residues 322 to 342 (LMMNVGVAALVIFALGAYVSY). Residues 345-364 (CSSSSSSSSPSSSSSSTKPE) form a disordered region. A compositionally biased stretch (low complexity) spans 346–364 (SSSSSSSSPSSSSSSTKPE).

The protein belongs to the small heat shock protein (HSP20) family.

It is found in the cell membrane. Seems to not be involved in heat resistance. Unable to mediate restriction of long-distance movement of the pathogenic tobacco etch virus (TEV) without causing a hypersensitive response or inducing systemic acquired resistance. The chain is Inactive protein RESTRICTED TEV MOVEMENT 2 (RTM2) from Arabidopsis thaliana (Mouse-ear cress).